Reading from the N-terminus, the 228-residue chain is Thrombin-like enzyme gyroxin analog (228 aa).

The Peptidase S1 domain maps to 1–222; that stretch reads VIGGDECNIN…YLDWIQSVIA (222 aa). 6 disulfides stabilise this stretch: C7-C138, C28-C44, C78-C227, C117-C183, C149-C162, and C173-C198. The Charge relay system role is filled by H43. N-linked (GlcNAc...) asparagine glycans are attached at residues N45 and N81. Catalysis depends on D88, which acts as the Charge relay system. Residue N145 is glycosylated (N-linked (GlcNAc...) asparagine). Catalysis depends on S177, which acts as the Charge relay system. The N-linked (GlcNAc...) asparagine glycan is linked to N224.

Belongs to the peptidase S1 family. Snake venom subfamily. In terms of assembly, monomer. As to expression, expressed by the venom gland.

It is found in the secreted. The enzyme catalyses Selective cleavage of Arg-|-Xaa bond in fibrinogen, to form fibrin, and release fibrinopeptide A. The specificity of further degradation of fibrinogen varies with species origin of the enzyme.. Inhibited competitively by amidines and guanidines, and irreversibly inhibited by diisopropylfluorophosphate. Functionally, thrombin-like snake venom serine protease, that cleaves alpha-chain of fibrinogen (FGA) releases only fibrinopeptide A. Shows coagulant, esterase and amidase activities. Induces the barrel rotation syndrome in mice, which is manifested by gyroxin-like, rapid rolling motions. May also reversibly increase the permeability of the blood brain barrier (BBB) in mice. This Lachesis muta muta (Bushmaster) protein is Thrombin-like enzyme gyroxin analog.